Here is a 698-residue protein sequence, read N- to C-terminus: Capon-like protein (698 aa).

The 170-residue stretch at 25–194 folds into the PID domain; sequence FFHGITFQAK…SELLDVEQIS (170 aa). The tract at residues 191 to 240 is disordered; it reads EQISEQQLSEDGERGGGDNETPKKEHLAITPDLNHTQPQRPNHLDIMPSH. The span at 201–217 shows a compositional bias: basic and acidic residues; that stretch reads DGERGGGDNETPKKEHL. Coiled-coil stretches lie at residues 265–327, 379–484, and 554–583; these read RSEI…LASL, NQQL…LNAN, and LNED…GNLA. Positions 396-423 are enriched in low complexity; it reads SQHLQNLQQQQQQQQQQQQQQTQAAPTA. The segment at 396 to 460 is disordered; the sequence is SQHLQNLQQQ…QQQQQQQQDA (65 aa). Polar residues predominate over residues 436–447; it reads YPSMSALQSISN. Positions 448-458 are enriched in low complexity; sequence QLQQQQQQQQQ. The tract at residues 588–698 is disordered; the sequence is GGSTSTRDTS…RTTWARHTTK (111 aa). A compositionally biased stretch (low complexity) spans 590 to 640; sequence STSTRDTSRSSSTLDSPSSPRLRSSNNNISPGSSNGNQNHNNNSNSNSSSS. Polar residues-rich tracts occupy residues 662–672 and 679–698; these read LSATPSFITRS and NRSQ…HTTK.

In terms of tissue distribution, expressed at higher level in wing imaginal disk.

In terms of biological role, putative adapter protein. This Drosophila melanogaster (Fruit fly) protein is Capon-like protein.